The chain runs to 98 residues: Mu-type opioid receptor (98 aa).

Residues 1 to 9 (YTKMKTATN) are Cytoplasmic-facing. A helical transmembrane segment spans residues 10–34 (IYIFNLALADALATSTLPFQSVNYL). Residues 35 to 45 (MGTWPFGTILC) lie on the Extracellular side of the membrane. Residues 46–68 (KIVISIDYYNMFTSIFTLCTMSV) form a helical membrane-spanning segment. Residues 69–88 (DRYIAVCHPVKALDFRTPRN) lie on the Cytoplasmic side of the membrane. Position 71 is a phosphotyrosine (Tyr-71). A helical transmembrane segment spans residues 89–98 (AKTVNVCNWI).

This sequence belongs to the G-protein coupled receptor 1 family. In terms of assembly, forms homooligomers and heterooligomers with other GPCRs, such as OPRD1, OPRK1, OPRL1, NPFFR2, ADRA2A, SSTR2, CNR1 and CCR5 (probably in dimeric forms). Interacts with heterotrimeric G proteins; interaction with a heterotrimeric complex containing GNAI1, GNB1 and GNG2 stabilizes the active conformation of the receptor and increases its affinity for endomorphin-2, the synthetic opioid peptide DAMGO and for morphinan agonists. Interacts with PPL; the interaction disrupts agonist-mediated G-protein activation. Interacts (via C-terminus) with DNAJB4 (via C-terminus). Interacts with calmodulin; the interaction inhibits the constitutive activity of OPRM1; it abolishes basal and attenuates agonist-stimulated G-protein coupling. Interacts with FLNA, PLD2, RANBP9 and WLS and GPM6A. Interacts with RTP4. Interacts with SYP and GNAS. Interacts with RGS9, RGS17, RGS20, RGS4, PPP1R9B and HINT1. In terms of processing, phosphorylated. Differentially phosphorylated in basal and agonist-induced conditions. Agonist-mediated phosphorylation modulates receptor internalization. Phosphorylated by GRK2 in a agonist-dependent manner. Phosphorylated on tyrosine residues; the phosphorylation is involved in agonist-induced G-protein-independent receptor down-regulation. Post-translationally, phosphorylated. Differentially phosphorylated in basal and agonist-induced conditions. Agonist-mediated phosphorylation modulates receptor internalization. Phosphorylated by GRK2 in a agonist-dependent manner. Phosphorylated on tyrosine residues; the phosphorylation is involved in agonist-induced G-protein-independent receptor down-regulation. Ubiquitinated. A basal ubiquitination seems not to be related to degradation. Ubiquitination is increased upon formation of OPRM1:OPRD1 oligomers leading to proteasomal degradation; the ubiquitination is diminished by RTP4.

Its subcellular location is the cell membrane. The protein localises to the cell projection. It is found in the axon. It localises to the perikaryon. The protein resides in the dendrite. Its subcellular location is the endosome. In terms of biological role, receptor for endogenous opioids such as beta-endorphin and endomorphin. Receptor for natural and synthetic opioids including morphine, heroin, DAMGO, fentanyl, etorphine, buprenorphin and methadone. Also activated by enkephalin peptides, such as Met-enkephalin or Met-enkephalin-Arg-Phe, with higher affinity for Met-enkephalin-Arg-Phe. Agonist binding to the receptor induces coupling to an inactive GDP-bound heterotrimeric G-protein complex and subsequent exchange of GDP for GTP in the G-protein alpha subunit leading to dissociation of the G-protein complex with the free GTP-bound G-protein alpha and the G-protein beta-gamma dimer activating downstream cellular effectors. The agonist- and cell type-specific activity is predominantly coupled to pertussis toxin-sensitive G(i) and G(o) G alpha proteins, GNAI1, GNAI2, GNAI3 and GNAO1, and to a lesser extent to pertussis toxin-insensitive G alpha proteins GNAZ and GNA15. They mediate an array of downstream cellular responses, including inhibition of adenylate cyclase activity and both N-type and L-type calcium channels, activation of inward rectifying potassium channels, mitogen-activated protein kinase (MAPK), phospholipase C (PLC), phosphoinositide/protein kinase (PKC), phosphoinositide 3-kinase (PI3K) and regulation of NF-kappa-B. Also couples to adenylate cyclase stimulatory G alpha proteins. The selective temporal coupling to G-proteins and subsequent signaling can be regulated by RGSZ proteins, such as RGS9, RGS17 and RGS4. Phosphorylation by members of the GPRK subfamily of Ser/Thr protein kinases and association with beta-arrestins is involved in short-term receptor desensitization. Beta-arrestins associate with the GPRK-phosphorylated receptor and uncouple it from the G-protein thus terminating signal transduction. The phosphorylated receptor is internalized through endocytosis via clathrin-coated pits which involves beta-arrestins. The activation of the ERK pathway occurs either in a G-protein-dependent or a beta-arrestin-dependent manner and is regulated by agonist-specific receptor phosphorylation. Acts as a class A G-protein coupled receptor (GPCR) which dissociates from beta-arrestin at or near the plasma membrane and undergoes rapid recycling. Receptor down-regulation pathways are varying with the agonist and occur dependent or independent of G-protein coupling. Endogenous ligands induce rapid desensitization, endocytosis and recycling. Heterooligomerization with other GPCRs can modulate agonist binding, signaling and trafficking properties. Involved in neurogenesis. This Cavia porcellus (Guinea pig) protein is Mu-type opioid receptor (OPRM1).